Consider the following 506-residue polypeptide: UDP-N-acetylmuramoyl-L-alanyl-D-glutamate--2,6-diaminopimelate ligase (506 aa).

S42 provides a ligand contact to UDP-N-acetyl-alpha-D-muramoyl-L-alanyl-D-glutamate. 125-131 lines the ATP pocket; the sequence is GTSGKTT. UDP-N-acetyl-alpha-D-muramoyl-L-alanyl-D-glutamate contacts are provided by residues 166–167, S193, and R201; that span reads TT. K233 bears the N6-carboxylysine mark. Meso-2,6-diaminopimelate contacts are provided by residues R395, 419 to 422, G475, and E479; that span reads DNPR. A Meso-diaminopimelate recognition motif motif is present at residues 419 to 422; the sequence is DNPR.

It belongs to the MurCDEF family. MurE subfamily. Requires Mg(2+) as cofactor. In terms of processing, carboxylation is probably crucial for Mg(2+) binding and, consequently, for the gamma-phosphate positioning of ATP.

It is found in the cytoplasm. It carries out the reaction UDP-N-acetyl-alpha-D-muramoyl-L-alanyl-D-glutamate + meso-2,6-diaminopimelate + ATP = UDP-N-acetyl-alpha-D-muramoyl-L-alanyl-gamma-D-glutamyl-meso-2,6-diaminopimelate + ADP + phosphate + H(+). Its pathway is cell wall biogenesis; peptidoglycan biosynthesis. Functionally, catalyzes the addition of meso-diaminopimelic acid to the nucleotide precursor UDP-N-acetylmuramoyl-L-alanyl-D-glutamate (UMAG) in the biosynthesis of bacterial cell-wall peptidoglycan. This is UDP-N-acetylmuramoyl-L-alanyl-D-glutamate--2,6-diaminopimelate ligase from Streptomyces coelicolor (strain ATCC BAA-471 / A3(2) / M145).